A 709-amino-acid polypeptide reads, in one-letter code: Leucine-rich repeat-containing protein 4B (709 aa).

Residues 1-38 form the signal peptide; sequence MAQAHIRGSPCPLLPPGRMSWPHGALLLLWLFSPPLRA. The LRRNT domain occupies 50–88; that stretch reads GGGSPPATSCPAACSCSNQASRVICTRRELAEVPASIPV. LRR repeat units lie at residues 89-110, 113-134, 137-158, 161-182, 185-207, 210-231, 232-253, 256-277, and 280-301; these read NTRY…TFKH, HLEI…AFNG, SLNT…AFEY, KLRE…AFNR, SLRR…AFEG, NLRY…TALV, RLEE…SFQG, SLRK…AFDD, and SLEE…LFTP. The N-linked (GlcNAc...) asparagine glycan is linked to Asn226. Residues Asn285, Asn335, Asn376, Asn402, Asn424, Asn427, Asn446, and Asn454 are each glycosylated (N-linked (GlcNAc...) asparagine). One can recognise an LRRCT domain in the interval 313-365; it reads NPWHCNCDVLWLSWWLKETVPSNTTCCARCHAPAGLKGRYIGELDQSHFTCYA. Residues 366–454 enclose the Ig-like C2-type domain; that stretch reads PVIVEPPTDL…GNTTASATLN (89 aa). Residues Cys387 and Cys438 are joined by a disulfide bond. Residues 496-552 are disordered; the sequence is TQPGEEAQQPRGTEKEPPGPTTDGAWGGGRPDAAAPASASTTAPAPRSSRPTEKAFT. The span at 528-544 shows a compositional bias: low complexity; the sequence is AAAPASASTTAPAPRSS. The helical transmembrane segment at 575–595 threads the bilayer; sequence IIIGCFVAITFMAAVMLVAFY. Ser689 carries the post-translational modification Phosphoserine.

In terms of assembly, interacts with PTPRF. Interacts with DLG4. Post-translationally, N-glycosylated. O-glycosylated; contains sialic acid.

The protein resides in the membrane. The protein localises to the presynaptic cell membrane. Functionally, synaptic adhesion protein. Regulates the formation of excitatory synapses. The trans-synaptic adhesion between LRRC4B and PTPRF regulates the formation of excitatory synapses in a bidirectional manner. The polypeptide is Leucine-rich repeat-containing protein 4B (Lrrc4b) (Mus musculus (Mouse)).